The sequence spans 162 residues: 2-C-methyl-D-erythritol 2,4-cyclodiphosphate synthase (162 aa).

D8 and H10 together coordinate a divalent metal cation. Residues 8-10 (DVH) and 36-37 (HS) each bind 4-CDP-2-C-methyl-D-erythritol 2-phosphate. A divalent metal cation is bound at residue H44. Residues 58 to 60 (DIG), 63 to 67 (FPDTD), 102 to 108 (AQAPKMA), 134 to 137 (TTTE), F141, and R144 contribute to the 4-CDP-2-C-methyl-D-erythritol 2-phosphate site.

This sequence belongs to the IspF family. Homotrimer. The cofactor is a divalent metal cation.

It catalyses the reaction 4-CDP-2-C-methyl-D-erythritol 2-phosphate = 2-C-methyl-D-erythritol 2,4-cyclic diphosphate + CMP. It functions in the pathway isoprenoid biosynthesis; isopentenyl diphosphate biosynthesis via DXP pathway; isopentenyl diphosphate from 1-deoxy-D-xylulose 5-phosphate: step 4/6. In terms of biological role, involved in the biosynthesis of isopentenyl diphosphate (IPP) and dimethylallyl diphosphate (DMAPP), two major building blocks of isoprenoid compounds. Catalyzes the conversion of 4-diphosphocytidyl-2-C-methyl-D-erythritol 2-phosphate (CDP-ME2P) to 2-C-methyl-D-erythritol 2,4-cyclodiphosphate (ME-CPP) with a corresponding release of cytidine 5-monophosphate (CMP). This chain is 2-C-methyl-D-erythritol 2,4-cyclodiphosphate synthase, found in Yersinia enterocolitica serotype O:8 / biotype 1B (strain NCTC 13174 / 8081).